A 313-amino-acid chain; its full sequence is Biotin synthase (313 aa).

Residues 28–258 (NFGNDIELCS…LFPQARLRLS (231 aa)) enclose the Radical SAM core domain. [4Fe-4S] cluster is bound by residues Cys-46, Cys-50, and Cys-53. [2Fe-2S] cluster-binding residues include Cys-90, Cys-121, Cys-181, and Arg-256.

The protein belongs to the radical SAM superfamily. Biotin synthase family. As to quaternary structure, homodimer. Requires [4Fe-4S] cluster as cofactor. [2Fe-2S] cluster serves as cofactor.

It catalyses the reaction (4R,5S)-dethiobiotin + (sulfur carrier)-SH + 2 reduced [2Fe-2S]-[ferredoxin] + 2 S-adenosyl-L-methionine = (sulfur carrier)-H + biotin + 2 5'-deoxyadenosine + 2 L-methionine + 2 oxidized [2Fe-2S]-[ferredoxin]. Its pathway is cofactor biosynthesis; biotin biosynthesis; biotin from 7,8-diaminononanoate: step 2/2. Its function is as follows. Catalyzes the conversion of dethiobiotin (DTB) to biotin by the insertion of a sulfur atom into dethiobiotin via a radical-based mechanism. The protein is Biotin synthase of Francisella tularensis subsp. tularensis (strain WY96-3418).